A 267-amino-acid chain; its full sequence is Serine acetyltransferase (267 aa).

Belongs to the transferase hexapeptide repeat family.

The protein resides in the cytoplasm. The catalysed reaction is L-serine + acetyl-CoA = O-acetyl-L-serine + CoA. It participates in amino-acid biosynthesis; L-cysteine biosynthesis; L-cysteine from L-serine: step 1/2. This is Serine acetyltransferase (cysE) from Haemophilus influenzae (strain ATCC 51907 / DSM 11121 / KW20 / Rd).